A 340-amino-acid chain; its full sequence is Probable tRNA pseudouridine synthase B (340 aa).

Catalysis depends on Asp-82, which acts as the Nucleophile. In terms of domain architecture, PUA spans 250 to 325 (LPKVWIKDSA…IAVDVEKVFM (76 aa)).

This sequence belongs to the pseudouridine synthase TruB family. Type 2 subfamily.

It catalyses the reaction uridine(55) in tRNA = pseudouridine(55) in tRNA. Its function is as follows. Could be responsible for synthesis of pseudouridine from uracil-55 in the psi GC loop of transfer RNAs. The sequence is that of Probable tRNA pseudouridine synthase B from Pyrococcus furiosus (strain ATCC 43587 / DSM 3638 / JCM 8422 / Vc1).